The primary structure comprises 194 residues: MPTLIVATGNPGKLAEMQTYLEPLGCQLTLKPTEIEVEETGSTFYENACLKASQVAKAVNQWAIADDSGLAVDALDGAPGLYSARYGNTDRERIAKLLQALEGVSQRQAQFICVVSIAAPDGSIQLSTKGICSGEITHSPRGDQGFGYDPIFWLPEHKKTFAEMTKVEKQKVSHRGKAFNKLIHQWPGLKFDSF.

Residue 8–13 (TGNPGK) coordinates substrate. Positions 38 and 67 each coordinate Mg(2+). D67 serves as the catalytic Proton acceptor. Residues S68, 146–149 (FGYD), K169, and 174–175 (HR) each bind substrate.

The protein belongs to the HAM1 NTPase family. Homodimer. It depends on Mg(2+) as a cofactor.

The enzyme catalyses XTP + H2O = XMP + diphosphate + H(+). It carries out the reaction dITP + H2O = dIMP + diphosphate + H(+). It catalyses the reaction ITP + H2O = IMP + diphosphate + H(+). In terms of biological role, pyrophosphatase that catalyzes the hydrolysis of nucleoside triphosphates to their monophosphate derivatives, with a high preference for the non-canonical purine nucleotides XTP (xanthosine triphosphate), dITP (deoxyinosine triphosphate) and ITP. Seems to function as a house-cleaning enzyme that removes non-canonical purine nucleotides from the nucleotide pool, thus preventing their incorporation into DNA/RNA and avoiding chromosomal lesions. This is dITP/XTP pyrophosphatase from Synechocystis sp. (strain ATCC 27184 / PCC 6803 / Kazusa).